Reading from the N-terminus, the 656-residue chain is uncharacterized protein (656 aa).

This is an uncharacterized protein from Rickettsia prowazekii (strain Madrid E).